Consider the following 79-residue polypeptide: Putative membrane protein insertion efficiency factor (79 aa).

The protein belongs to the UPF0161 family.

It is found in the cell inner membrane. Its function is as follows. Could be involved in insertion of integral membrane proteins into the membrane. This chain is Putative membrane protein insertion efficiency factor, found in Prochlorococcus marinus (strain NATL1A).